We begin with the raw amino-acid sequence, 2009 residues long: Rootletin (2009 aa).

Coiled coils occupy residues 74–265 (EMAS…VTSD) and 346–438 (ASLH…LRLQ). Disordered stretches follow at residues 462–519 (ALSD…CSDS), 575–594 (RDQT…EAQR), 636–665 (ELKR…LERS), 1180–1225 (EAQR…ELRS), and 1448–1501 (GRVS…EAVR). Over residues 463–484 (LSDTESGVQLSSSERTADTSDG) the composition is skewed to polar residues. Coiled coils occupy residues 550-1058 (LGSV…LLAE) and 1091-1439 (LEME…GLRS). Positions 577–586 (QTAASAQAQE) are enriched in low complexity. Residues 656–665 (ARARRELERS) show a composition bias toward basic and acidic residues. 3 positions are modified to phosphoserine: S1453, S1463, and S1469. At Y1475 the chain carries Phosphotyrosine. A phosphoserine mark is found at S1476, S1479, S1483, S1489, and S1568. Residues 1479-1494 (SQPPSPGLIASPAPPD) are compositionally biased toward pro residues. Coiled-coil stretches lie at residues 1498-1697 (EAVR…GTLQ) and 1744-1998 (HLQK…RSSA). Residues 1957–2009 (QVQTERTLEARERAHRQRVSGLEEQVSTLKAQLHQELRRSSASVSLPPGTPEK) are disordered.

It belongs to the rootletin family. As to quaternary structure, homomer. Interacts with KLC3, NEK2 and the N-terminus of CEP250. Interacts with CEP44. Post-translationally, phosphorylated by NEK2 which may regulate its association with centrosomes. In terms of tissue distribution, highest expression detected in photoreceptor cells of retina. Expressed at lower levels in brain, trachea and kidney. Detected in all major ciliated epithelia. During embryonic development, enriched along the apical domains of neuroepithelium in brain ventricular zone, in primordia of retinal pigment epithelia and in neural retina.

The protein localises to the cytoplasm. The protein resides in the cytoskeleton. It is found in the microtubule organizing center. Its subcellular location is the centrosome. It localises to the centriole. The protein localises to the cilium basal body. Its function is as follows. Major structural component of the ciliary rootlet, a cytoskeletal-like structure in ciliated cells which originates from the basal body at the proximal end of a cilium and extends proximally toward the cell nucleus. Furthermore, is required for the correct positioning of the cilium basal body relative to the cell nucleus, to allow for ciliogenesis. Contributes to centrosome cohesion before mitosis. This Mus musculus (Mouse) protein is Rootletin.